Consider the following 487-residue polypeptide: Protein NEN2 (487 aa).

Residues 18–179 (FFDVETTIPF…LDDVRMNFEV (162 aa)) form the Exonuclease domain. Residues Asp20 and Glu22 each coordinate Mg(2+). His167 (proton donor/acceptor) is an active-site residue. Asp172 is a Mg(2+) binding site. 2 disordered regions span residues 200 to 233 (NSVT…TGEN) and 269 to 291 (SDVP…GTGD). Residues 221 to 233 (PLQSPTDQQTGEN) are compositionally biased toward polar residues.

Requires Mg(2+) as cofactor. In terms of tissue distribution, expressed in the sieve elements and phloem pole pericycle cells.

It is found in the cytoplasm. Its subcellular location is the nucleus. Probable exonuclease involved in enuclation of sieve elements. The chain is Protein NEN2 from Arabidopsis thaliana (Mouse-ear cress).